The chain runs to 262 residues: Nurim (262 aa).

Topologically, residues 1–4 (MAPA) are nuclear. Residues 5–28 (LLLIPAALASFILAFGTGVEFVRF) form a helical membrane-spanning segment. The Perinuclear space portion of the chain corresponds to 29 to 58 (TSLRPLLGGIPESGGPDARQGWLAALQDRS). Residues 59 to 80 (ILAPLAWDLGLLLLFVGQHSLM) traverse the membrane as a helical segment. Over 81–97 (AAERVKAWTSRYFGVLQ) the chain is Nuclear. Residues 98 to 114 (RSLYVACTALALQLVMR) form a helical membrane-spanning segment. Topologically, residues 115–133 (YWEPIPKGPVLWEARAEPW) are perinuclear space. A helical membrane pass occupies residues 134-164 (ATWVPLLCFVLHVISWLLIFSILLVFDYAEL). Topologically, residues 165 to 191 (MGLKQVYYHVLGLGEPLALKSPRALRL) are nuclear. Residues 192–210 (FSHLRHPVCVELLTVLWVV) traverse the membrane as a helical segment. Residues 211–216 (PTLGTD) are Perinuclear space-facing. Residues 217–234 (RLLLAFLLTLYLGLAHGL) traverse the membrane as a helical segment. Residues 235–262 (DQQDLRYLRAQLQRKLHLLSRPQDGEAE) lie on the Nuclear side of the membrane.

This sequence belongs to the nurim family.

The protein localises to the nucleus inner membrane. This chain is Nurim (NRM), found in Homo sapiens (Human).